The primary structure comprises 345 residues: Probable aldo-keto reductase 4 (345 aa).

Catalysis depends on Tyr63, which acts as the Proton donor. His130 contributes to the substrate binding site. Position 209 to 219 (209 to 219 (SPLGRGFFASG)) interacts with NADP(+).

Belongs to the aldo/keto reductase family.

The chain is Probable aldo-keto reductase 4 from Arabidopsis thaliana (Mouse-ear cress).